The chain runs to 128 residues: Large ribosomal subunit protein bL21 (128 aa).

The tract at residues Gly104–Glu128 is disordered. Low complexity predominate over residues Glu119 to Glu128.

The protein belongs to the bacterial ribosomal protein bL21 family. Part of the 50S ribosomal subunit. Contacts protein L20.

Functionally, this protein binds to 23S rRNA in the presence of protein L20. The polypeptide is Large ribosomal subunit protein bL21 (Rhodopseudomonas palustris (strain HaA2)).